The primary structure comprises 137 residues: Structural protein A137R (137 aa).

The protein belongs to the asfivirus A137R family. In terms of assembly, interacts with host TBK1.

The protein resides in the virion. Its subcellular location is the host cytoplasm. Functionally, plays a role in the inhibition of the host innate immune response. Mechanistically, promotes the autophagy-mediated lysosomal degradation of host TBK1 and affects IRF3 nuclear translocation to block type I IFN production. The sequence is that of Structural protein A137R from Ornithodoros (relapsing fever ticks).